The chain runs to 814 residues: Immunoglobulin superfamily DCC subclass member 3 (814 aa).

The first 35 residues, 1–35 (MAVQRAASPRRPPAPLWPRLLLPLLLLLLPAPSEG), serve as a signal peptide directing secretion. Ig-like C2-type domains follow at residues 36 to 139 (LGHS…ATMS), 140 to 220 (DFHV…IRIS), 238 to 321 (PAIL…RTAQ), and 329 to 416 (PAEF…ARLT). 2 cysteine pairs are disulfide-bonded: C63-C117 and C160-C209. The N-linked (GlcNAc...) asparagine glycan is linked to N93. N246 carries an N-linked (GlcNAc...) asparagine glycan. 2 disulfide bridges follow: C259–C307 and C351–C400. Residues N381 and N382 are each glycosylated (N-linked (GlcNAc...) asparagine). Fibronectin type-III domains are found at residues 426 to 520 (PPRN…TLGE) and 523 to 618 (APPP…ASER). 3 N-linked (GlcNAc...) asparagine glycosylation sites follow: N580, N604, and N634. The chain crosses the membrane as a helical span at residues 641 to 661 (IVIGIHIGVTCIIFCVLFLLF). 2 disordered regions span residues 722-743 (PPAS…APAP) and 762-814 (GKTT…HSEQ). Over residues 770–781 (TEATAPCAGLAA) the composition is skewed to low complexity.

Belongs to the immunoglobulin superfamily. DCC family.

It localises to the membrane. This chain is Immunoglobulin superfamily DCC subclass member 3 (IGDCC3), found in Homo sapiens (Human).